The sequence spans 446 residues: Tol-Pal system protein TolB (446 aa).

A signal peptide spans 1–24 (MKRAFLSALSVGLAALFLTGPAQA).

The protein belongs to the TolB family. As to quaternary structure, the Tol-Pal system is composed of five core proteins: the inner membrane proteins TolA, TolQ and TolR, the periplasmic protein TolB and the outer membrane protein Pal. They form a network linking the inner and outer membranes and the peptidoglycan layer.

Its subcellular location is the periplasm. Functionally, part of the Tol-Pal system, which plays a role in outer membrane invagination during cell division and is important for maintaining outer membrane integrity. This chain is Tol-Pal system protein TolB, found in Dinoroseobacter shibae (strain DSM 16493 / NCIMB 14021 / DFL 12).